We begin with the raw amino-acid sequence, 565 residues long: uncharacterized protein (565 aa).

5 consecutive transmembrane segments (helical) span residues 4-26 (FVQFLGSNPYILLFLTIGLAVWV), 33-55 (GYGLGAVAAAIVVGCLVATVGAA), 68-90 (SLLYYLFMYGVGLRVGPSFVNAL), 97-119 (YAILAIIAPILGLAIVVLGTQFF), and 162-184 (ISAMIALSYGITYIWGTVGIILL). RCK C-terminal domains follow at residues 210–295 (PNVD…LGPE) and 296–379 (VPDA…IFGV). The next 5 membrane-spanning stretches (helical) occupy residues 389-411 (LLTLSFGMILGFLIGLIEVPAFG), 415-432 (GLGNAGGLLLSGIIVSSI), 453-472 (LGLIGFVAIVGINAGADLLT), 482-504 (IFIVGFLASTIPPIIVWAIGFHI), and 539-561 (WLGFPVGYAVSGVLLTVFGYFAM).

Belongs to the AAE transporter (TC 2.A.81) family.

The protein localises to the cell membrane. This is an uncharacterized protein from Bordetella bronchiseptica (strain ATCC BAA-588 / NCTC 13252 / RB50) (Alcaligenes bronchisepticus).